A 240-amino-acid chain; its full sequence is 3-dehydroquinate dehydratase (240 aa).

Residues Ser-15, 42–44 (EWR), and Arg-73 each bind 3-dehydroquinate. Residue His-132 is the Proton donor/acceptor of the active site. The Schiff-base intermediate with substrate role is filled by Lys-160. Positions 202, 221, and 225 each coordinate 3-dehydroquinate.

This sequence belongs to the type-I 3-dehydroquinase family. In terms of assembly, homodimer.

The enzyme catalyses 3-dehydroquinate = 3-dehydroshikimate + H2O. The protein operates within metabolic intermediate biosynthesis; chorismate biosynthesis; chorismate from D-erythrose 4-phosphate and phosphoenolpyruvate: step 3/7. Functionally, involved in the third step of the chorismate pathway, which leads to the biosynthesis of aromatic amino acids. Catalyzes the cis-dehydration of 3-dehydroquinate (DHQ) and introduces the first double bond of the aromatic ring to yield 3-dehydroshikimate. The protein is 3-dehydroquinate dehydratase of Latilactobacillus sakei subsp. sakei (strain 23K) (Lactobacillus sakei subsp. sakei).